A 300-amino-acid chain; its full sequence is Alpha-tubulin N-acetyltransferase 1 (300 aa).

In terms of domain architecture, N-acetyltransferase spans 1–190 (MEFPFDVDAL…NNFVIFEGFF (190 aa)). K56 bears the N6-acetyllysine; by autocatalysis mark. 124 to 137 (FYIHESLQRHGHGR) serves as a coordination point for acetyl-CoA. Residue K146 is modified to N6-acetyllysine; by autocatalysis. 160-169 (SQKLLKFLNK) provides a ligand contact to acetyl-CoA. K210 and K221 each carry N6-acetyllysine; by autocatalysis. 2 disordered regions span residues 229-263 (PLNRAPRRATPPAHPPPRSSSLGNSPERGPLRPFV) and 280-300 (TARLLLATDPGGSPAQRRRTR). Residues S249 and S253 each carry the phosphoserine modification. Position 282 is an asymmetric dimethylarginine (R282). S292 carries the post-translational modification Phosphoserine. The residue at position 300 (R300) is an Omega-N-methylarginine.

This sequence belongs to the acetyltransferase ATAT1 family. As to quaternary structure, component of the BBSome complex. Interacts with AP2 alpha-adaptins, including AP2A2, but not with AP1 gamma-adaptin (AP1G1/AP1G2); this interaction is required for efficient alpha-tubulin acetylation, hence clathrin-coated pits are sites of microtubule acetylation. In terms of processing, autoacetylation strongly increases tubulin acetylation.

The protein resides in the cytoplasm. The protein localises to the membrane. It is found in the clathrin-coated pit. It localises to the cell junction. Its subcellular location is the focal adhesion. The protein resides in the cell projection. The protein localises to the axon. It is found in the cytoskeleton. It localises to the spindle. It catalyses the reaction L-lysyl-[alpha-tubulin] + acetyl-CoA = N(6)-acetyl-L-lysyl-[alpha-tubulin] + CoA + H(+). Functionally, specifically acetylates 'Lys-40' in alpha-tubulin on the lumenal side of microtubules. Promotes microtubule destabilization and accelerates microtubule dynamics; this activity may be independent of acetylation activity. Acetylates alpha-tubulin with a slow enzymatic rate, due to a catalytic site that is not optimized for acetyl transfer. Enters the microtubule through each end and diffuses quickly throughout the lumen of microtubules. Acetylates only long/old microtubules because of its slow acetylation rate since it does not have time to act on dynamically unstable microtubules before the enzyme is released. Required for normal sperm flagellar function. Promotes directional cell locomotion and chemotaxis, through AP2A2-dependent acetylation of alpha-tubulin at clathrin-coated pits that are concentrated at the leading edge of migrating cells. May facilitate primary cilium assembly. The polypeptide is Alpha-tubulin N-acetyltransferase 1 (Sus scrofa (Pig)).